The sequence spans 301 residues: Probable alpha-L-glutamate ligase (301 aa).

The ATP-grasp domain maps to 104–287; that stretch reads LQLLSRKGIG…VADEIIRFIE (184 aa). ATP-binding positions include Lys141, 178–179, Asp187, and 211–213; these read EF and RSN. Mg(2+)-binding residues include Asp248, Glu260, and Asn262. Residues Asp248, Glu260, and Asn262 each contribute to the Mn(2+) site.

The protein belongs to the RimK family. The cofactor is Mg(2+). It depends on Mn(2+) as a cofactor.

The chain is Probable alpha-L-glutamate ligase from Syntrophotalea carbinolica (strain DSM 2380 / NBRC 103641 / GraBd1) (Pelobacter carbinolicus).